The chain runs to 208 residues: Holliday junction branch migration complex subunit RuvA (208 aa).

The domain I stretch occupies residues 1–69; sequence MIGFLQGYVV…EDQMVLFGFA (69 aa). The domain II stretch occupies residues 70 to 148; sequence VVAERDLFRQ…EWRDQAGLKT (79 aa). A flexible linker region spans residues 149 to 159; the sequence is LPSAGPIDSVQ. Residues 159–208 form a domain III region; it reads QEDVEMTLLALGYTSQEVMRALQAVGQNTALAKNSDTEAWIREAIAWLSQ.

Belongs to the RuvA family. As to quaternary structure, homotetramer. Forms an RuvA(8)-RuvB(12)-Holliday junction (HJ) complex. HJ DNA is sandwiched between 2 RuvA tetramers; dsDNA enters through RuvA and exits via RuvB. An RuvB hexamer assembles on each DNA strand where it exits the tetramer. Each RuvB hexamer is contacted by two RuvA subunits (via domain III) on 2 adjacent RuvB subunits; this complex drives branch migration. In the full resolvosome a probable DNA-RuvA(4)-RuvB(12)-RuvC(2) complex forms which resolves the HJ.

It is found in the cytoplasm. Its function is as follows. The RuvA-RuvB-RuvC complex processes Holliday junction (HJ) DNA during genetic recombination and DNA repair, while the RuvA-RuvB complex plays an important role in the rescue of blocked DNA replication forks via replication fork reversal (RFR). RuvA specifically binds to HJ cruciform DNA, conferring on it an open structure. The RuvB hexamer acts as an ATP-dependent pump, pulling dsDNA into and through the RuvAB complex. HJ branch migration allows RuvC to scan DNA until it finds its consensus sequence, where it cleaves and resolves the cruciform DNA. The protein is Holliday junction branch migration complex subunit RuvA of Acaryochloris marina (strain MBIC 11017).